A 253-amino-acid polypeptide reads, in one-letter code: Phosphoadenosine 5'-phosphosulfate reductase (253 aa).

Cys-239 functions as the Nucleophile; cysteine thiosulfonate intermediate in the catalytic mechanism.

It belongs to the PAPS reductase family. CysH subfamily.

The protein resides in the cytoplasm. It carries out the reaction [thioredoxin]-disulfide + sulfite + adenosine 3',5'-bisphosphate + 2 H(+) = [thioredoxin]-dithiol + 3'-phosphoadenylyl sulfate. The protein operates within sulfur metabolism; hydrogen sulfide biosynthesis; sulfite from sulfate: step 3/3. Catalyzes the formation of sulfite from phosphoadenosine 5'-phosphosulfate (PAPS) using thioredoxin as an electron donor. This chain is Phosphoadenosine 5'-phosphosulfate reductase, found in Aliivibrio fischeri (strain MJ11) (Vibrio fischeri).